The sequence spans 326 residues: Ficolin-1 (326 aa).

An N-terminal signal peptide occupies residues 1–29 (MELSGATMARGLAVLLVLFLHIKNLPAQA). In terms of domain architecture, Collagen-like spans 55–93 (GLPGAPGPKGEAGVIGERGERGLPGAPGKAGPVGPKGDR). The disordered stretch occupies residues 72-111 (RGERGLPGAPGKAGPVGPKGDRGEKGMRGEKGDAGQSQSC). Residues 77 to 89 (LPGAPGKAGPVGP) are compositionally biased toward low complexity. The span at 90–104 (KGDRGEKGMRGEKGD) shows a compositional bias: basic and acidic residues. The Fibrinogen C-terminal domain maps to 109–326 (QSCATGPRNC…KVSEMKVRPA (218 aa)). Cystine bridges form between Cys111-Cys139 and Cys118-Cys146. The tract at residues 115–154 (PRNCKDLLDRGYFLSGWHTIYLPDCRPLTVLCDMDTDGGG) is a domain; contributes to trimerization. Residues 155–243 (WTVFQRRMDG…LVLGAFVGGS (89 aa)) are b domain; contributes to trimerization. Positions 262, 264, 266, and 268 each coordinate Ca(2+). Cys270 and Cys283 are oxidised to a cystine. 282 to 284 (DCH) contributes to the a carbohydrate binding site. N-linked (GlcNAc...) asparagine glycosylation occurs at Asn305. The tract at residues 317–326 (KVSEMKVRPA) is p domain.

Belongs to the ficolin lectin family. As to quaternary structure, homotrimer. Interacts with elastin/ELN. Interacts (via Fibrinogen C-terminal domain) with FFAR2. Interacts with CRP; may regulate monocyte activation by FCN1. In terms of tissue distribution, peripheral blood leukocytes, monocytes and granulocytes. Also detected in spleen, lung, and thymus, may be due to the presence of tissue macrophages or trapped blood in these tissues. Not detected on lymphocytes.

Its subcellular location is the secreted. The protein resides in the cell membrane. Its function is as follows. Extracellular lectin functioning as a pattern-recognition receptor in innate immunity. Binds the sugar moieties of pathogen-associated molecular patterns (PAMPs) displayed on microbes and activates the lectin pathway of the complement system. May also activate monocytes through a G protein-coupled receptor, FFAR2, inducing the secretion of interleukin-8/IL-8. Binds preferentially to 9-O-acetylated 2-6-linked sialic acid derivatives and to various glycans containing sialic acid engaged in a 2-3 linkage. The polypeptide is Ficolin-1 (FCN1) (Homo sapiens (Human)).